The following is a 783-amino-acid chain: Polyribonucleotide nucleotidyltransferase 1, mitochondrial (783 aa).

The transit peptide at 1–46 directs the protein to the mitochondrion; sequence MAACRYCCSCLRLRPLSDGPFCLPGRDRALTQLLVRALWSSTGSRA. N6-acetyllysine occurs at positions 250, 264, 285, and 289. At Lys552 the chain carries N6-succinyllysine. Residues 605–664 enclose the KH domain; the sequence is PVVETVQVPLSKRAKFVGPGGYNLKKLQAETGVTISQVDEETFSVFAPTPSALHEARDFI. Residues 679–750 enclose the S1 motif domain; that stretch reads GAVYTATITE…ADGRMRLSRK (72 aa). Phosphoserine occurs at positions 754 and 782.

Belongs to the polyribonucleotide nucleotidyltransferase family. In terms of assembly, homotrimer; in free form. Homooligomer. Component of the mitochondrial degradosome (mtEXO) complex which is a heteropentamer containing 2 copies of SUPV3L1 and 3 copies of PNPT1. As part of the mitochondrial degradosome complex, interacts with GRSF1 in an RNA-dependent manner; the interaction enhances the activity of the complex. Interacts with TCL1A; the interaction has no effect on PNPT1 exonuclease activity.

Its subcellular location is the cytoplasm. It is found in the mitochondrion matrix. The protein resides in the mitochondrion intermembrane space. It carries out the reaction RNA(n+1) + phosphate = RNA(n) + a ribonucleoside 5'-diphosphate. RNA-binding protein implicated in numerous RNA metabolic processes. Catalyzes the phosphorolysis of single-stranded polyribonucleotides processively in the 3'-to-5' direction. Mitochondrial intermembrane factor with RNA-processing exoribonulease activity. Component of the mitochondrial degradosome (mtEXO) complex, that degrades 3' overhang double-stranded RNA with a 3'-to-5' directionality in an ATP-dependent manner. Involved in the degradation of non-coding mitochondrial transcripts (MT-ncRNA) and tRNA-like molecules. Required for correct processing and polyadenylation of mitochondrial mRNAs. Plays a role as a cytoplasmic RNA import factor that mediates the translocation of small RNA components like the 5S RNA, the RNA subunit of ribonuclease P and the mitochondrial RNA-processing (MRP) RNA, into the mitochondrial matrix. Plays a role in mitochondrial morphogenesis and respiration; regulates the expression of the electron transport chain (ETC) components at the mRNA and protein levels. In the cytoplasm, shows a 3'-to-5' exoribonuclease mediating mRNA degradation activity; degrades c-myc mRNA upon treatment with IFNB1/IFN-beta, resulting in a growth arrest in melanoma cells. Regulates the stability of specific mature miRNAs in melanoma cells; specifically and selectively degrades miR-221, preferentially. Also plays a role in RNA cell surveillance by cleaning up oxidized RNAs. Binds to the RNA subunit of ribonuclease P, MRP RNA and miR-221 microRNA. This is Polyribonucleotide nucleotidyltransferase 1, mitochondrial (PNPT1) from Pongo abelii (Sumatran orangutan).